A 647-amino-acid polypeptide reads, in one-letter code: Leishmanolysin-like peptidase (647 aa).

Histidine 264 lines the Zn(2+) pocket. The active site involves glutamate 265. The Zn(2+) site is built by histidine 268 and histidine 370.

This sequence belongs to the peptidase M8 family. Zn(2+) is required as a cofactor. As to expression, expressed in all cell lines analyzed.

The protein localises to the cytoplasm. It is found in the lipid droplet. Its function is as follows. Metalloprotease. The sequence is that of Leishmanolysin-like peptidase (LMLN) from Homo sapiens (Human).